A 178-amino-acid chain; its full sequence is ATP-dependent protease subunit HslV (178 aa).

T7 is a catalytic residue. Na(+) contacts are provided by G162, C165, and T168.

Belongs to the peptidase T1B family. HslV subfamily. A double ring-shaped homohexamer of HslV is capped on each side by a ring-shaped HslU homohexamer. The assembly of the HslU/HslV complex is dependent on binding of ATP.

The protein resides in the cytoplasm. It catalyses the reaction ATP-dependent cleavage of peptide bonds with broad specificity.. Its activity is regulated as follows. Allosterically activated by HslU binding. Protease subunit of a proteasome-like degradation complex believed to be a general protein degrading machinery. The polypeptide is ATP-dependent protease subunit HslV (Burkholderia vietnamiensis (strain G4 / LMG 22486) (Burkholderia cepacia (strain R1808))).